Reading from the N-terminus, the 384-residue chain is Lipoprotein LprN (384 aa).

Positions 1-20 (MNRIWLRAIILTASSALLAG) are cleaved as a signal peptide. The N-palmitoyl cysteine moiety is linked to residue C21. The S-diacylglycerol cysteine moiety is linked to residue C21.

Lipidated upon expression in E.coli.

Its subcellular location is the cell membrane. In terms of biological role, stimulates the host (mouse) immune response; lipidated protein produced in E.coli stimulates T-cell proliferation in mice previously sensitized with LprN. Spleenocytes from these mice produce increased amounts of TNF-alpha and IFN-gamma, as well as somewhat increased nitric oxide levels, upon subsequent challenge with LprN. Previously sensitized mice infected with M.tuberculosis have an exacerbated disease response, suggesting this lipoprotein may down-regulate the host's immune response. This chain is Lipoprotein LprN (lprN), found in Mycobacterium tuberculosis (strain ATCC 25618 / H37Rv).